Here is a 1020-residue protein sequence, read N- to C-terminus: Protein translocase subunit SecA (1020 aa).

Residues glutamine 143, 161–165 (GEGKT), and aspartate 661 contribute to the ATP site. The segment at 974 to 1020 (SVYNASPGAENEAPLQRPVTADSKPGRNDPCPCGSGKKYKNCHGQQP) is disordered. Residues cysteine 1004, cysteine 1006, cysteine 1015, and histidine 1016 each coordinate Zn(2+).

Belongs to the SecA family. As to quaternary structure, monomer and homodimer. Part of the essential Sec protein translocation apparatus which comprises SecA, SecYEG and auxiliary proteins SecDF. Other proteins may also be involved. Requires Zn(2+) as cofactor.

The protein resides in the cell inner membrane. The protein localises to the cytoplasm. The catalysed reaction is ATP + H2O + cellular proteinSide 1 = ADP + phosphate + cellular proteinSide 2.. Its function is as follows. Part of the Sec protein translocase complex. Interacts with the SecYEG preprotein conducting channel. Has a central role in coupling the hydrolysis of ATP to the transfer of proteins into and across the cell membrane, serving as an ATP-driven molecular motor driving the stepwise translocation of polypeptide chains across the membrane. The chain is Protein translocase subunit SecA from Chlorobium phaeovibrioides (strain DSM 265 / 1930) (Prosthecochloris vibrioformis (strain DSM 265)).